Here is a 92-residue protein sequence, read N- to C-terminus: Alpha-conotoxin-like Rt20.2 (92 aa).

The signal sequence occupies residues 1–24; sequence MPKLEMMLLVLLILPLSYFSAAGG. Residues 25–45 constitute a propeptide that is removed on maturation; it reads QVVQGDLHSDVLARYLQRGDR. Residue Glu49 is modified to 4-carboxyglutamate. Pro55 carries the post-translational modification 4-hydroxyproline. 4 cysteine pairs are disulfide-bonded: Cys63-Cys72, Cys68-Cys80, Cys73-Cys90, and Cys78-Cys92.

It belongs to the conotoxin D superfamily. In terms of assembly, hetero-, homo- or pseudo-homodimer (identical sequence, different post-translational modifications). Expressed by the venom duct.

Its subcellular location is the secreted. Functionally, alpha-conotoxins act on postsynaptic membranes, they bind to the nicotinic acetylcholine receptors (nAChR) and thus inhibit them. Through its two C-terminal domains, this homodimeric protein would bind to two nAChR allosteric sites, located outside the nAChR C-loop of the principal binding face and at the adjacent binding interface in a clockwise direction. This toxin specifically blocks mammalian neuronal nAChR of the alpha-7/CHRNA7, alpha-3-beta-2/CHRNA3-CHRNB2 and alpha-4-beta-2/CHRNA4-CHRNB2 subtypes. In Conus rattus (Rat cone), this protein is Alpha-conotoxin-like Rt20.2.